The primary structure comprises 408 residues: MKKQILQLNLEQTSSAAAEDTNLDCSLAGYDYVLPPERIAQNPAVPRDSSRLLVVNSQTTGKETPPLHQIFRDLPDILRPGDLLIMNNTKVIPARLYGRKSSGAEVEILLLEERKFNCWLALVKPGKRFKKGTQIIFEGLGIRNLGIKNSPHYPLSPEGFPPSPVPNPHQLTATVLETDKATGGRLLQFDLPEGESLVQLLDKFGEIPLPPYITASQAADEQYQTVYAEQPGAIAAPTAGLHFTPELLEKLRDRNINQAFITLHVGVGTFRPVEVEDVATHQMHEEWIEIPAATVAQIKATKAAGGRIIAVGTTVVRALEGAAASGDLQEFCGKTNLFIYPGYKWQVVEGLITNFHLPRSSLLMLVSALIGRERLLNIYQEAIASQYRFYSFGDAMLILPEARGVNSH.

Belongs to the QueA family. Monomer.

It is found in the cytoplasm. The enzyme catalyses 7-aminomethyl-7-carbaguanosine(34) in tRNA + S-adenosyl-L-methionine = epoxyqueuosine(34) in tRNA + adenine + L-methionine + 2 H(+). Its pathway is tRNA modification; tRNA-queuosine biosynthesis. In terms of biological role, transfers and isomerizes the ribose moiety from AdoMet to the 7-aminomethyl group of 7-deazaguanine (preQ1-tRNA) to give epoxyqueuosine (oQ-tRNA). This Trichormus variabilis (strain ATCC 29413 / PCC 7937) (Anabaena variabilis) protein is S-adenosylmethionine:tRNA ribosyltransferase-isomerase.